Reading from the N-terminus, the 108-residue chain is Thioredoxin (108 aa).

A Thioredoxin domain is found at 2–108 (NKIIELTDQN…LKDFLDENIK (107 aa)). Cys32 and Cys35 are joined by a disulfide.

The protein belongs to the thioredoxin family.

Its function is as follows. Participates in various redox reactions through the reversible oxidation of its active center dithiol to a disulfide and catalyzes dithiol-disulfide exchange reactions. The polypeptide is Thioredoxin (trxA) (Buchnera aphidicola subsp. Schizaphis graminum (strain Sg)).